A 261-amino-acid polypeptide reads, in one-letter code: Glucose 1-dehydrogenase 2 (261 aa).

An NADP(+)-binding site is contributed by 11-35 (VVTGGSKGLGRAMAVRFGQEQSKVV). Serine 145 is a binding site for substrate. Tyrosine 158 (proton acceptor) is an active-site residue.

This sequence belongs to the short-chain dehydrogenases/reductases (SDR) family. Homotetramer.

The catalysed reaction is D-glucose + NAD(+) = D-glucono-1,5-lactone + NADH + H(+). It carries out the reaction D-glucose + NADP(+) = D-glucono-1,5-lactone + NADPH + H(+). In Priestia megaterium (Bacillus megaterium), this protein is Glucose 1-dehydrogenase 2 (gdhII).